The following is a 752-amino-acid chain: MAP/microtubule affinity-regulating kinase 4 (752 aa).

Residues Met-1–Arg-36 form a disordered region. Residues Tyr-59–Ile-310 enclose the Protein kinase domain. Residues Ile-65 to Val-73 and Lys-88 contribute to the ATP site. The active-site Proton acceptor is the Asp-181. A Phosphothreonine; by LKB1 modification is found at Thr-214. Residues Glu-324 to Gly-368 enclose the UBA domain. Residues Ala-385 to Asn-614 are disordered. Residues Ser-391–Ser-406 are compositionally biased toward low complexity. Ser-423 and Ser-543 each carry phosphoserine. The span at Pro-544–Ser-553 shows a compositional bias: low complexity. Residues Ala-703 to Leu-752 form the KA1 domain.

This sequence belongs to the protein kinase superfamily. CAMK Ser/Thr protein kinase family. SNF1 subfamily. In terms of assembly, interacts with MAPT/TAU. Interacts with gamma-tubulin. Interacts with ODF2. Interacts with USP9X. Interacts with YWHAQ. Interacts with NLRP3; promoting NLRP3 recruitment to microtubule organizing center (MTOC). It depends on Mg(2+) as a cofactor. Ubiquitinated with 'Lys-29'- and 'Lys-33'-linked polyubiquitins which appear to impede LKB1-mediated phosphorylation. Deubiquitinated by USP9X. In terms of processing, phosphorylated at Thr-214 by STK11/LKB1 in complex with STE20-related adapter-alpha (STRADA) pseudo kinase and CAB39. Phosphorylated throughout the cell cycle. Ubiquitous. Isoform 2 is brain-specific. Expressed at highest levels in brain and testis. Also expressed in heart, lung, liver, muscle, kidney and spleen.

The protein localises to the cytoplasm. Its subcellular location is the cytoskeleton. It is found in the microtubule organizing center. The protein resides in the centrosome. It localises to the cilium basal body. The protein localises to the cilium axoneme. Its subcellular location is the cell projection. It is found in the dendrite. The enzyme catalyses L-seryl-[protein] + ATP = O-phospho-L-seryl-[protein] + ADP + H(+). The catalysed reaction is L-threonyl-[protein] + ATP = O-phospho-L-threonyl-[protein] + ADP + H(+). With respect to regulation, activated by phosphorylation on Thr-214. Serine/threonine-protein kinase. Phosphorylates the microtubule-associated protein MAPT/TAU. Also phosphorylates the microtubule-associated proteins MAP2 and MAP4. Involved in regulation of the microtubule network, causing reorganization of microtubules into bundles. Required for the initiation of axoneme extension during cilium assembly. Regulates the centrosomal location of ODF2 and phosphorylates ODF2 in vitro. Plays a role in cell cycle progression, specifically in the G1/S checkpoint. Reduces neuronal cell survival. Plays a role in energy homeostasis by regulating satiety and metabolic rate. Promotes adipogenesis by activating JNK1 and inhibiting the p38MAPK pathway, and triggers apoptosis by activating the JNK1 pathway. Phosphorylates mTORC1 complex member RPTOR and acts as a negative regulator of the mTORC1 complex, probably due to disruption of the interaction between phosphorylated RPTOR and the RRAGA/RRAGC heterodimer which is required for mTORC1 activation. Involved in NLRP3 positioning along microtubules by mediating NLRP3 recruitment to microtubule organizing center (MTOC) upon inflammasome activation. This is MAP/microtubule affinity-regulating kinase 4 from Homo sapiens (Human).